Here is a 199-residue protein sequence, read N- to C-terminus: Thymidylate kinase (199 aa).

7–14 (GTEGVGKT) provides a ligand contact to ATP.

Belongs to the thymidylate kinase family.

It carries out the reaction dTMP + ATP = dTDP + ADP. In terms of biological role, phosphorylation of dTMP to form dTDP in both de novo and salvage pathways of dTTP synthesis. The polypeptide is Thymidylate kinase (Acinetobacter baumannii (strain ATCC 17978 / DSM 105126 / CIP 53.77 / LMG 1025 / NCDC KC755 / 5377)).